The sequence spans 217 residues: Large ribosomal subunit protein eL14 (217 aa).

Lysine 79 carries the post-translational modification N6-acetyllysine. Lysine 85 bears the N6-acetyllysine; alternate mark. Lysine 85 is subject to N6-succinyllysine; alternate. A Glycyl lysine isopeptide (Lys-Gly) (interchain with G-Cter in SUMO2) cross-link involves residue lysine 124. The residue at position 139 (serine 139) is a Phosphoserine. Residues 162–217 (KVPAKKATGPGKKAAGQKAPAQKAAGQKAAPPAKGQKGQKTPAQKAPAPKAAGKKA) form a disordered region. The stretch at 173–177 (KKAAG) is one 1-1; approximate repeat. A 4 X 5 AA tandem repeats of Q-K-A-[APS]-X region spans residues 173–192 (KKAAGQKAPAQKAAGQKAAP). Repeat copies occupy residues 178-182 (QKAPA), 183-187 (QKAAG), 188-192 (QKAAP), 195-197 (KGQ), and 198-200 (KGQ). Residues 195-200 (KGQKGQ) form a 2 X 3 AA tandem repeats of K-G-Q region. The residue at position 206 (lysine 206) is an N6-succinyllysine.

Belongs to the eukaryotic ribosomal protein eL14 family. In terms of assembly, component of the large ribosomal subunit.

The protein resides in the cytoplasm. Functionally, component of the large ribosomal subunit. The ribosome is a large ribonucleoprotein complex responsible for the synthesis of proteins in the cell. This Mus musculus (Mouse) protein is Large ribosomal subunit protein eL14 (Rpl14).